A 197-amino-acid chain; its full sequence is Large ribosomal subunit protein bL25 (197 aa).

It belongs to the bacterial ribosomal protein bL25 family. CTC subfamily. As to quaternary structure, part of the 50S ribosomal subunit; part of the 5S rRNA/L5/L18/L25 subcomplex. Contacts the 5S rRNA. Binds to the 5S rRNA independently of L5 and L18.

This is one of the proteins that binds to the 5S RNA in the ribosome where it forms part of the central protuberance. This chain is Large ribosomal subunit protein bL25, found in Caulobacter vibrioides (strain ATCC 19089 / CIP 103742 / CB 15) (Caulobacter crescentus).